An 880-amino-acid chain; its full sequence is Valine--tRNA ligase (880 aa).

The 'HIGH' region motif lies at 49–59 (PNVTGKLHLGH). Residues 525–529 (KMSKS) carry the 'KMSKS' region motif. Lys528 is an ATP binding site. The stretch at 809-880 (LEGLINIDEE…VEKRIAELKN (72 aa)) forms a coiled coil.

This sequence belongs to the class-I aminoacyl-tRNA synthetase family. ValS type 1 subfamily. In terms of assembly, monomer.

It localises to the cytoplasm. It catalyses the reaction tRNA(Val) + L-valine + ATP = L-valyl-tRNA(Val) + AMP + diphosphate. Its function is as follows. Catalyzes the attachment of valine to tRNA(Val). As ValRS can inadvertently accommodate and process structurally similar amino acids such as threonine, to avoid such errors, it has a 'posttransfer' editing activity that hydrolyzes mischarged Thr-tRNA(Val) in a tRNA-dependent manner. The sequence is that of Valine--tRNA ligase from Bacillus licheniformis (strain ATCC 14580 / DSM 13 / JCM 2505 / CCUG 7422 / NBRC 12200 / NCIMB 9375 / NCTC 10341 / NRRL NRS-1264 / Gibson 46).